Reading from the N-terminus, the 483-residue chain is Glutamyl-tRNA(Gln) amidotransferase subunit A (483 aa).

Residues lysine 77 and serine 152 each act as charge relay system in the active site. The active-site Acyl-ester intermediate is the serine 176.

Belongs to the amidase family. GatA subfamily. Heterotrimer of A, B and C subunits.

The enzyme catalyses L-glutamyl-tRNA(Gln) + L-glutamine + ATP + H2O = L-glutaminyl-tRNA(Gln) + L-glutamate + ADP + phosphate + H(+). Its function is as follows. Allows the formation of correctly charged Gln-tRNA(Gln) through the transamidation of misacylated Glu-tRNA(Gln) in organisms which lack glutaminyl-tRNA synthetase. The reaction takes place in the presence of glutamine and ATP through an activated gamma-phospho-Glu-tRNA(Gln). In Listeria welshimeri serovar 6b (strain ATCC 35897 / DSM 20650 / CCUG 15529 / CIP 8149 / NCTC 11857 / SLCC 5334 / V8), this protein is Glutamyl-tRNA(Gln) amidotransferase subunit A.